A 1215-amino-acid polypeptide reads, in one-letter code: Endoplasmic reticulum transmembrane helix translocase (1215 aa).

Topologically, residues 1-27 are cytoplasmic; sequence MTKKSFVSSPIVRDSTLLVPKSLIAKP. A helical membrane pass occupies residues 28-43; sequence YVLPFFPLYATFAQLY. At 44–56 the chain is on the lumenal side; the sequence is FQQYDRYIKGPEW. The helical transmembrane segment at 57 to 76 threads the bilayer; that stretch reads TFVYLGTLVSLNILVMLMPA. The Cytoplasmic portion of the chain corresponds to 77–188; that stretch reads WNVKIKAKFN…ENSFDIPIPT (112 aa). The A-domain; part 1 stretch occupies residues 156 to 185; the sequence is KIGDFQKCKGHSGDLTHLKRLYGENSFDIP. The chain crosses the membrane as a helical span at residues 189–216; that stretch reads FMELFKEHAVAPLFVFQVFCVALWLLDE. A topological domain (lumenal) is located at residue Phe-217. Residues 218-246 traverse the membrane as a helical segment; that stretch reads WYYSLFNLFMIISMEAAAVFQRLTALKEF. Topologically, residues 247–395 are cytoplasmic; the sequence is RTMGIKPYTI…IYSAERVSVD (149 aa). The tract at residues 250–390 is A-domain; part 2; it reads GIKPYTINVF…LVRVMIYSAE (141 aa). Residue Ser-324 is modified to Phosphoserine. A helical transmembrane segment spans residues 396-425; the sequence is NKEALMFILFLLIFAVIASWYVWVEGTKMG. Topologically, residues 426–427 are lumenal; the sequence is RI. A run of 2 helical transmembrane segments spans residues 428–442 and 446–464; these read QSKLILDCILIITSV and ELPMELTMAVNSSLAALAK. Over 465–971 the chain is Cytoplasmic; it reads FYVYCTEPFR…APFTSKLANV (507 aa). A P-domain; part 1 region spans residues 466-495; that stretch reads YVYCTEPFRIPFAGRIDVCCFDKTGTLTGE. Asp-487 (4-aspartylphosphate intermediate) is an active-site residue. The Mg(2+) site is built by Asp-487 and Thr-489. Residues 487–489, Phe-582, Arg-634, Asp-699, and 816–820 contribute to the ATP site; these read DKT and DGTND. The N-domain stretch occupies residues 497 to 674; it reads LVFEGLAGIS…FNGFLIFHCP (178 aa). The tract at residues 677 to 837 is P-domain; part 2; sequence DDAIETIKML…HVGIALLNGT (161 aa). Mg(2+) is bound at residue Asp-816. An arm-like region spans residues 838–953; the sequence is EEGLKKLGEQ…DAQGDEAPAL (116 aa). A Phosphoserine modification is found at Ser-936. Residues 954-969 form a P-domain; part 3 region; the sequence is KLGDASCAAPFTSKLA. A helical membrane pass occupies residues 972–1011; that stretch reads SAVTNIIRQGRCALVNTIQMYKILALNCLISAYSLSIIYM. At 1012 to 1017 the chain is on the lumenal side; it reads AGVKFG. A helical transmembrane segment spans residues 1018-1035; the sequence is DGQATVSGLLLSVCFLSI. Residues 1036–1055 are Cytoplasmic-facing; sequence SRGKPLEKLSKQRPQSGIFN. Residues 1056 to 1084 form a helical membrane-spanning segment; that stretch reads VYIMGSILSQFAVHIATLVYITTEIYKLE. Residues 1085-1099 are Lumenal-facing; it reads PREPQVDLEKEFAPS. Residues 1100-1121 traverse the membrane as a helical segment; the sequence is LLNTGIFIIQLVQQVSTFAVNY. The Cytoplasmic segment spans residues 1122–1133; it reads QGEPFRENIRSN. Residues 1134–1151 traverse the membrane as a helical segment; the sequence is KGMYYGLLGVTGLALASA. Residues 1152–1168 are Lumenal-facing; sequence TEFLPELNEAMKFVPMT. Residues 1169-1197 form a helical membrane-spanning segment; that stretch reads DDFKIKLTLTLLLDFFGSWGVEHFFKFFF. Residues 1198–1215 lie on the Cytoplasmic side of the membrane; sequence MDDKPSDISVQQVKIASK.

It belongs to the cation transport ATPase (P-type) (TC 3.A.3) family. Type V subfamily. Mg(2+) is required as a cofactor.

The protein resides in the endoplasmic reticulum membrane. It catalyses the reaction [protein]-with a C-terminal TM segment(out) + ATP + H2O = [protein]-with a C-terminal TM segment(in) + ADP + phosphate + H(+). With respect to regulation, the ATPase activity is stimulated by phosphatidylinositol 4-phosphate (PI4P). Functionally, endoplasmic reticulum translocase required to remove mitochondrial transmembrane proteins mistargeted to the endoplasmic reticulum. Acts as a dislocase that mediates the ATP-dependent extraction of mislocalized mitochondrial transmembrane proteins from the endoplasmic reticulum membrane. Specifically binds mitochondrial tail-anchored transmembrane proteins: has an atypically large substrate-binding pocket that recognizes and binds moderately hydrophobic transmembranes with short hydrophilic lumenal domains. The protein is Endoplasmic reticulum transmembrane helix translocase of Saccharomyces cerevisiae (strain ATCC 204508 / S288c) (Baker's yeast).